The sequence spans 607 residues: TOM1-like protein 8 (607 aa).

Residues 9–138 (ATSDMLIGPD…ELLRAGIVFP (130 aa)) form the VHS domain. Positions 141–175 (PQITPSSGQNGPSTRYPQNSRNARQEAIDTSTESE) are disordered. Residues 175 to 263 (EFPTLSLTEI…LLAKHEAIAS (89 aa)) enclose the GAT domain. Phosphoserine is present on Ser-297. Residues 355–379 (NNCESSTPTSNPHANHQKVQQNYSN) are compositionally biased toward polar residues. 3 disordered regions span residues 355 to 393 (NNCE…YYGQ), 407 to 460 (QPSS…SPTH), and 555 to 582 (DNGN…NKKP). Residue Ser-410 is modified to Phosphoserine. The segment covering 448–460 (QSPSSSPQYSPTH) has biased composition (low complexity). Positions 555–569 (DNGNNNTNPYQVSSH) are enriched in polar residues.

It belongs to the TOM1 family. In terms of tissue distribution, specifically expressed in siliques and flowers.

The protein resides in the membrane. Functionally, might contribute to the loading of the ESCRT machinery. The chain is TOM1-like protein 8 from Arabidopsis thaliana (Mouse-ear cress).